The primary structure comprises 240 residues: 1-(5-phosphoribosyl)-5-[(5-phosphoribosylamino)methylideneamino] imidazole-4-carboxamide isomerase (240 aa).

The active-site Proton acceptor is the Asp-8. Residue Asp-130 is the Proton donor of the active site.

Belongs to the HisA/HisF family.

The protein resides in the cytoplasm. The catalysed reaction is 1-(5-phospho-beta-D-ribosyl)-5-[(5-phospho-beta-D-ribosylamino)methylideneamino]imidazole-4-carboxamide = 5-[(5-phospho-1-deoxy-D-ribulos-1-ylimino)methylamino]-1-(5-phospho-beta-D-ribosyl)imidazole-4-carboxamide. Its pathway is amino-acid biosynthesis; L-histidine biosynthesis; L-histidine from 5-phospho-alpha-D-ribose 1-diphosphate: step 4/9. This chain is 1-(5-phosphoribosyl)-5-[(5-phosphoribosylamino)methylideneamino] imidazole-4-carboxamide isomerase, found in Elusimicrobium minutum (strain Pei191).